A 21-amino-acid chain; its full sequence is Glutathione S-transferase 1 (21 aa).

It belongs to the GST superfamily. Phi family.

It catalyses the reaction RX + glutathione = an S-substituted glutathione + a halide anion + H(+). Its function is as follows. Conjugation of reduced glutathione to a wide number of exogenous and endogenous hydrophobic electrophiles. In plants, may have a detoxification role against certain herbicides. This Populus euphratica (Euphrates poplar) protein is Glutathione S-transferase 1.